The following is a 781-amino-acid chain: Translation initiation factor IF-2 (781 aa).

Positions 44–195 (RQLDNAVDGT…TPPKPKELPE (152 aa)) are disordered. The segment covering 53–65 (TNKKAEAPKKETT) has biased composition (basic and acidic residues). The segment covering 66-81 (SNENGNSKGPNKPNMT) has biased composition (polar residues). A compositionally biased stretch (low complexity) spans 82 to 93 (NSNEKSNKPNKP). Residues 115–126 (KPANTGNQTQAS) are compositionally biased toward polar residues. A compositionally biased stretch (low complexity) spans 127–169 (GNQQAGGQKRNNNNNSNRPGGGNPNRPGGNNRPNRGGNFNNKG). The tr-type G domain maps to 282–451 (ERPPVVTIMG…LLVSEVEELK (170 aa)). Residues 291 to 298 (GHVDHGKT) form a G1 region. Residue 291–298 (GHVDHGKT) participates in GTP binding. The interval 316–320 (GITQH) is G2. The interval 337-340 (DTPG) is G3. Residues 337–341 (DTPGH) and 391–394 (NKID) contribute to the GTP site. A G4 region spans residues 391–394 (NKID). Residues 427-429 (SAK) are G5.

Belongs to the TRAFAC class translation factor GTPase superfamily. Classic translation factor GTPase family. IF-2 subfamily.

The protein resides in the cytoplasm. In terms of biological role, one of the essential components for the initiation of protein synthesis. Protects formylmethionyl-tRNA from spontaneous hydrolysis and promotes its binding to the 30S ribosomal subunits. Also involved in the hydrolysis of GTP during the formation of the 70S ribosomal complex. This chain is Translation initiation factor IF-2, found in Listeria monocytogenes serotype 4a (strain HCC23).